The sequence spans 475 residues: ATP synthase subunit beta (475 aa).

152–159 (GGAGVGKT) lines the ATP pocket.

This sequence belongs to the ATPase alpha/beta chains family. F-type ATPases have 2 components, CF(1) - the catalytic core - and CF(0) - the membrane proton channel. CF(1) has five subunits: alpha(3), beta(3), gamma(1), delta(1), epsilon(1). CF(0) has three main subunits: a(1), b(2) and c(9-12). The alpha and beta chains form an alternating ring which encloses part of the gamma chain. CF(1) is attached to CF(0) by a central stalk formed by the gamma and epsilon chains, while a peripheral stalk is formed by the delta and b chains.

Its subcellular location is the cell inner membrane. The enzyme catalyses ATP + H2O + 4 H(+)(in) = ADP + phosphate + 5 H(+)(out). Functionally, produces ATP from ADP in the presence of a proton gradient across the membrane. The catalytic sites are hosted primarily by the beta subunits. The sequence is that of ATP synthase subunit beta from Wolbachia sp. subsp. Drosophila simulans (strain wRi).